The sequence spans 234 residues: 3-dehydroquinate dehydratase (234 aa).

3-dehydroquinate-binding positions include 33–35 (EWR) and R68. The active-site Proton donor/acceptor is the H124. K151 serves as the catalytic Schiff-base intermediate with substrate. The 3-dehydroquinate site is built by R193, S214, and Q218.

Belongs to the type-I 3-dehydroquinase family. In terms of assembly, homodimer.

It carries out the reaction 3-dehydroquinate = 3-dehydroshikimate + H2O. The protein operates within metabolic intermediate biosynthesis; chorismate biosynthesis; chorismate from D-erythrose 4-phosphate and phosphoenolpyruvate: step 3/7. Functionally, involved in the third step of the chorismate pathway, which leads to the biosynthesis of aromatic amino acids. Catalyzes the cis-dehydration of 3-dehydroquinate (DHQ) and introduces the first double bond of the aromatic ring to yield 3-dehydroshikimate. In Syntrophobacter fumaroxidans (strain DSM 10017 / MPOB), this protein is 3-dehydroquinate dehydratase.